The sequence spans 21 residues: DYE-linked aldehyde dehydrogenase, gamma chain (21 aa).

In terms of assembly, heterotetramer composed of an alpha, a beta and two gamma chains. It depends on [2Fe-2S] cluster as a cofactor.

Its function is as follows. Active with aldehydes and formate esters as substrates. The sequence is that of DYE-linked aldehyde dehydrogenase, gamma chain from Amycolatopsis methanolica.